Reading from the N-terminus, the 142-residue chain is Transcriptional regulator MraZ (142 aa).

2 consecutive SpoVT-AbrB domains span residues 5–47 (EYNH…PMEE) and 76–119 (ANEI…SREK).

The protein belongs to the MraZ family. In terms of assembly, forms oligomers.

The protein resides in the cytoplasm. Its subcellular location is the nucleoid. In Clostridium tetani (strain Massachusetts / E88), this protein is Transcriptional regulator MraZ.